The primary structure comprises 317 residues: Lipoyl synthase (317 aa).

The interval 1-22 (MVTVVNTLNRPRHPEKQNRPET) is disordered. Positions 12 to 22 (RHPEKQNRPET) are enriched in basic and acidic residues. [4Fe-4S] cluster-binding residues include cysteine 57, cysteine 62, cysteine 68, cysteine 83, cysteine 87, cysteine 90, and serine 296. The 217-residue stretch at 69 to 285 (WEKKHATFMI…ETVAYAKGFL (217 aa)) folds into the Radical SAM core domain.

It belongs to the radical SAM superfamily. Lipoyl synthase family. [4Fe-4S] cluster is required as a cofactor.

It is found in the cytoplasm. It carries out the reaction [[Fe-S] cluster scaffold protein carrying a second [4Fe-4S](2+) cluster] + N(6)-octanoyl-L-lysyl-[protein] + 2 oxidized [2Fe-2S]-[ferredoxin] + 2 S-adenosyl-L-methionine + 4 H(+) = [[Fe-S] cluster scaffold protein] + N(6)-[(R)-dihydrolipoyl]-L-lysyl-[protein] + 4 Fe(3+) + 2 hydrogen sulfide + 2 5'-deoxyadenosine + 2 L-methionine + 2 reduced [2Fe-2S]-[ferredoxin]. It participates in protein modification; protein lipoylation via endogenous pathway; protein N(6)-(lipoyl)lysine from octanoyl-[acyl-carrier-protein]: step 2/2. Its function is as follows. Catalyzes the radical-mediated insertion of two sulfur atoms into the C-6 and C-8 positions of the octanoyl moiety bound to the lipoyl domains of lipoate-dependent enzymes, thereby converting the octanoylated domains into lipoylated derivatives. This is Lipoyl synthase from Azorhizobium caulinodans (strain ATCC 43989 / DSM 5975 / JCM 20966 / LMG 6465 / NBRC 14845 / NCIMB 13405 / ORS 571).